Here is a 475-residue protein sequence, read N- to C-terminus: Peroxisome proliferator-activated receptor gamma (475 aa).

T54 is a glycosylation site (O-linked (GlcNAc) threonine). S82 bears the Phosphoserine; by MAPK mark. The segment at residues 106 to 180 is a DNA-binding region (nuclear receptor); it reads AIECRVCGDK…VGMSHNAIRF (75 aa). 2 NR C4-type zinc fingers span residues 109 to 129 and 146 to 168; these read CRVC…CEGC and CDLN…FQKC. Positions 175-250 are interaction with FAM120B; sequence HNAIRFGRMP…DKSPFVIYDM (76 aa). An NR LBD domain is found at 208–473; the sequence is DLRALAKHLY…HPLLQEIYKD (266 aa). K222 participates in a covalent cross-link: Glycyl lysine isopeptide (Lys-Gly) (interchain with G-Cter in ubiquitin). Residues 465–473 carry the 9aaTAD motif; sequence PLLQEIYKD.

Belongs to the nuclear hormone receptor family. NR1 subfamily. Interacts with FOXO1 (acetylated form). Heterodimer with other nuclear receptors, such as RXRA. The heterodimer with the retinoic acid receptor RXRA is called adipocyte-specific transcription factor ARF6. Interacts with NCOA6 coactivator, leading to a strong increase in transcription of target genes. Interacts with coactivator PPARBP, leading to a mild increase in transcription of target genes. Interacts with NOCA7 in a ligand-inducible manner. Interacts with NCOA1 and NCOA2 LXXLL motifs. Interacts with ASXL1, ASXL2, DNTTIP2, FAM120B, MAP2K1/MEK1, NR0B2, PDPK1, PRDM16, PRMT2 and TGFB1I1. Interacts (when activated by agonist) with PPP5C. Interacts with HELZ2 and THRAP3; the interaction stimulates the transcriptional activity of PPARG. Interacts with PER2, the interaction is ligand dependent and blocks PPARG recruitment to target promoters. Interacts with NOCT. Interacts with ACTN4. Interacts (when in the liganded conformation) with GPS2. Interacts with CRY1 and CRY2 in a ligand-dependent manner. In the absence of hormonal ligand, interacts with TACC1. In macrophages, interacts with PAQR3 and STUB1; the interactions promote PPARG poylubiquitination and STUB1-mediated degradation. O-GlcNAcylation at Thr-54 reduces transcriptional activity in adipocytes. In terms of processing, phosphorylated at basal conditions and dephosphorylated when treated with the ligand. May be dephosphorylated by PPP5C. The phosphorylated form may be inactive and dephosphorylation induces adipogenic activity. Post-translationally, ubiquitinated by E3 ubiquitin-protein ligase complex containing FBXO9; leading to proteasomal degradation. Ubiquitinated at Lys-222 by TRIM55 leading to proteasomal degradation. Ubiquitinated by E3 ubiquitin-protein ligase STUB1/CHIP; leading to proteasomal degradation.

The protein resides in the nucleus. The protein localises to the cytoplasm. With respect to regulation, PDPK1 activates its transcriptional activity independently of its kinase activity. Interacts with HELZ2 and THRAP3; the interaction enhances the transcriptional activity of PPARG. Nuclear receptor that binds peroxisome proliferators such as hypolipidemic drugs and fatty acids. Once activated by a ligand, the nuclear receptor binds to DNA specific PPAR response elements (PPRE) and modulates the transcription of its target genes, such as acyl-CoA oxidase. It therefore controls the peroxisomal beta-oxidation pathway of fatty acids. Key regulator of adipocyte differentiation and glucose homeostasis. ARF6 acts as a key regulator of the tissue-specific adipocyte P2 (aP2) enhancer. Acts as a critical regulator of gut homeostasis by suppressing NF-kappa-B-mediated pro-inflammatory responses. Plays a role in the regulation of cardiovascular circadian rhythms by regulating the transcription of BMAL1 in the blood vessels. This Cricetulus griseus (Chinese hamster) protein is Peroxisome proliferator-activated receptor gamma (PPARG).